A 107-amino-acid chain; its full sequence is Phosphoribosyl-ATP pyrophosphatase (107 aa).

Belongs to the PRA-PH family.

The protein resides in the cytoplasm. It carries out the reaction 1-(5-phospho-beta-D-ribosyl)-ATP + H2O = 1-(5-phospho-beta-D-ribosyl)-5'-AMP + diphosphate + H(+). It functions in the pathway amino-acid biosynthesis; L-histidine biosynthesis; L-histidine from 5-phospho-alpha-D-ribose 1-diphosphate: step 2/9. The sequence is that of Phosphoribosyl-ATP pyrophosphatase from Bacillus cytotoxicus (strain DSM 22905 / CIP 110041 / 391-98 / NVH 391-98).